A 103-amino-acid polypeptide reads, in one-letter code: MEIKTNAKIRVRLESFNHELLTSACRKISDTIQNSDATKLSVVSLPTDKRIYCVLRSPHVDKDSREHFELRVHKRVIEIYYDPTVKCRIISKFRITVRSIISY.

Belongs to the universal ribosomal protein uS10 family. Part of the 30S ribosomal subunit.

Its subcellular location is the plastid. It localises to the chloroplast. In terms of biological role, involved in the binding of tRNA to the ribosomes. The chain is Small ribosomal subunit protein uS10c from Trieres chinensis (Marine centric diatom).